The sequence spans 99 residues: HTH-type transcriptional regulator YgaV (99 aa).

The 93-residue stretch at 7-99 (LQASAEQAAA…IATLKNVYCP (93 aa)) folds into the HTH arsR-type domain. The segment at residues 41–64 (AGELTRITGLSASATSQHLARMRD) is a DNA-binding region (H-T-H motif).

Its activity is regulated as follows. In the presence of H(2)S, two cysteine residues form an intramolecular tetrasulfide bond, which attenuates the binding of YgaV to DNA. Both unmodified YgaV and sulfide-modified YgaV can probably function as either a repressor or an activator. Binds heme, which may influence the DNA-binding affinity. Functionally, transcriptional regulator that regulates large-scale gene expression in response to sulfide. May act as a global regulator responsible for redox homeostasis. It functions as both a repressor and an activator. In the absence of sulfide compounds, it negatively regulates many anaerobic respiratory genes, including formate, fumarate, lactate, nitrate and nitrite reductase genes. In the presence of hydrogen sulfide (H(2)S), YgaV activity is attenuated, leading to the expression of anaerobic respiratory and ROS scavenging genes, which contributes to redox homeostasis, reactive oxygen species (ROS) scavenging and antibiotic tolerance. It responds to H(2)O(2) scavenging and increases antibiotic tolerance under H(2)S-atmospheric conditions. It also negatively regulates its own expression by binding to the ygaVP promoter region. May also be involved in regulatory mechanisms that operate independently of sulfide. The sequence is that of HTH-type transcriptional regulator YgaV (ygaV) from Escherichia coli (strain K12).